Here is a 513-residue protein sequence, read N- to C-terminus: ATP synthase subunit alpha (513 aa).

An ATP-binding site is contributed by 170–177; the sequence is GDRQTGKT.

This sequence belongs to the ATPase alpha/beta chains family. F-type ATPases have 2 components, CF(1) - the catalytic core - and CF(0) - the membrane proton channel. CF(1) has five subunits: alpha(3), beta(3), gamma(1), delta(1), epsilon(1). CF(0) has three main subunits: a(1), b(2) and c(9-12). The alpha and beta chains form an alternating ring which encloses part of the gamma chain. CF(1) is attached to CF(0) by a central stalk formed by the gamma and epsilon chains, while a peripheral stalk is formed by the delta and b chains.

It is found in the cell inner membrane. The enzyme catalyses ATP + H2O + 4 H(+)(in) = ADP + phosphate + 5 H(+)(out). Produces ATP from ADP in the presence of a proton gradient across the membrane. The alpha chain is a regulatory subunit. The sequence is that of ATP synthase subunit alpha from Teredinibacter turnerae (strain ATCC 39867 / T7901).